The primary structure comprises 177 residues: Small ribosomal subunit protein uS4 (177 aa).

The S4 RNA-binding domain maps to 104 to 168 (RRLQTLVFRK…SPMASESHPE (65 aa)). The tract at residues 157 to 177 (PNSPMASESHPERTDSVKDAE) is disordered. The span at 165–177 (SHPERTDSVKDAE) shows a compositional bias: basic and acidic residues.

The protein belongs to the universal ribosomal protein uS4 family. Part of the 30S ribosomal subunit. Contacts protein S5. The interaction surface between S4 and S5 is involved in control of translational fidelity.

Its function is as follows. One of the primary rRNA binding proteins, it binds directly to 16S rRNA where it nucleates assembly of the body of the 30S subunit. In terms of biological role, with S5 and S12 plays an important role in translational accuracy. This chain is Small ribosomal subunit protein uS4, found in Methanococcus aeolicus (strain ATCC BAA-1280 / DSM 17508 / OCM 812 / Nankai-3).